The primary structure comprises 116 residues: Proline-rich protein 9 (116 aa).

This Homo sapiens (Human) protein is Proline-rich protein 9 (PRR9).